The following is a 75-amino-acid chain: Small ribosomal subunit protein bS18 (75 aa).

It belongs to the bacterial ribosomal protein bS18 family. As to quaternary structure, part of the 30S ribosomal subunit. Forms a tight heterodimer with protein bS6.

Functionally, binds as a heterodimer with protein bS6 to the central domain of the 16S rRNA, where it helps stabilize the platform of the 30S subunit. The polypeptide is Small ribosomal subunit protein bS18 (Shewanella halifaxensis (strain HAW-EB4)).